Consider the following 637-residue polypeptide: Nuclear receptor subfamily 2 group C member 1-A (637 aa).

Residues 149–224 constitute a DNA-binding region (nuclear receptor); the sequence is VELCVVCGDK…LGMKQDSVQC (76 aa). 2 consecutive NR C4-type zinc fingers follow at residues 152–172 and 188–207; these read CVVC…CEGC and CRGS…CQYC. In terms of domain architecture, NR LBD spans 383–624; it reads CLGSNANLLH…SIIPYILRME (242 aa).

Belongs to the nuclear hormone receptor family. NR2 subfamily.

It localises to the nucleus. Its function is as follows. Orphan nuclear receptor. Binds the IR7 element in the promoter of its own gene in an autoregulatory negative feedback mechanism. Primarily repressor of a broad range of genes. Binds to hormone response elements (HREs) consisting of two 5'-AGGTCA-3' half site direct repeat consensus sequences. This Xenopus laevis (African clawed frog) protein is Nuclear receptor subfamily 2 group C member 1-A (nr2c1-a).